The primary structure comprises 136 residues: Large ribosomal subunit protein uL22 (136 aa).

It belongs to the universal ribosomal protein uL22 family. Part of the 50S ribosomal subunit.

This protein binds specifically to 23S rRNA; its binding is stimulated by other ribosomal proteins, e.g. L4, L17, and L20. It is important during the early stages of 50S assembly. It makes multiple contacts with different domains of the 23S rRNA in the assembled 50S subunit and ribosome. In terms of biological role, the globular domain of the protein is located near the polypeptide exit tunnel on the outside of the subunit, while an extended beta-hairpin is found that lines the wall of the exit tunnel in the center of the 70S ribosome. The sequence is that of Large ribosomal subunit protein uL22 from Bacteroides thetaiotaomicron (strain ATCC 29148 / DSM 2079 / JCM 5827 / CCUG 10774 / NCTC 10582 / VPI-5482 / E50).